Here is a 130-residue protein sequence, read N- to C-terminus: Large ribosomal subunit protein bL19 (130 aa).

It belongs to the bacterial ribosomal protein bL19 family.

Functionally, this protein is located at the 30S-50S ribosomal subunit interface and may play a role in the structure and function of the aminoacyl-tRNA binding site. The sequence is that of Large ribosomal subunit protein bL19 from Parvibaculum lavamentivorans (strain DS-1 / DSM 13023 / NCIMB 13966).